The chain runs to 257 residues: Thiazole synthase (257 aa).

Lysine 96 functions as the Schiff-base intermediate with DXP in the catalytic mechanism. Residues glycine 157, 184–185, and 206–207 contribute to the 1-deoxy-D-xylulose 5-phosphate site; these read AG and NT.

This sequence belongs to the ThiG family. As to quaternary structure, homotetramer. Forms heterodimers with either ThiH or ThiS.

It localises to the cytoplasm. The enzyme catalyses [ThiS sulfur-carrier protein]-C-terminal-Gly-aminoethanethioate + 2-iminoacetate + 1-deoxy-D-xylulose 5-phosphate = [ThiS sulfur-carrier protein]-C-terminal Gly-Gly + 2-[(2R,5Z)-2-carboxy-4-methylthiazol-5(2H)-ylidene]ethyl phosphate + 2 H2O + H(+). Its pathway is cofactor biosynthesis; thiamine diphosphate biosynthesis. Catalyzes the rearrangement of 1-deoxy-D-xylulose 5-phosphate (DXP) to produce the thiazole phosphate moiety of thiamine. Sulfur is provided by the thiocarboxylate moiety of the carrier protein ThiS. In vitro, sulfur can be provided by H(2)S. In Bartonella henselae (strain ATCC 49882 / DSM 28221 / CCUG 30454 / Houston 1) (Rochalimaea henselae), this protein is Thiazole synthase.